Consider the following 156-residue polypeptide: Small ribosomal subunit protein uS7 (156 aa).

This sequence belongs to the universal ribosomal protein uS7 family. In terms of assembly, part of the 30S ribosomal subunit. Contacts proteins S9 and S11.

Its function is as follows. One of the primary rRNA binding proteins, it binds directly to 16S rRNA where it nucleates assembly of the head domain of the 30S subunit. Is located at the subunit interface close to the decoding center, probably blocks exit of the E-site tRNA. In Aeromonas hydrophila subsp. hydrophila (strain ATCC 7966 / DSM 30187 / BCRC 13018 / CCUG 14551 / JCM 1027 / KCTC 2358 / NCIMB 9240 / NCTC 8049), this protein is Small ribosomal subunit protein uS7.